Consider the following 277-residue polypeptide: Pantothenate synthetase (277 aa).

ATP is bound at residue 28 to 35 (MGALHSGH). The Proton donor role is filled by histidine 35. Glutamine 59 lines the (R)-pantoate pocket. Position 59 (glutamine 59) interacts with beta-alanine. ATP contacts are provided by residues 145–148 (GEKD), valine 174, and 182–185 (LSSR).

The protein belongs to the pantothenate synthetase family. As to quaternary structure, homodimer.

It is found in the cytoplasm. The catalysed reaction is (R)-pantoate + beta-alanine + ATP = (R)-pantothenate + AMP + diphosphate + H(+). Its pathway is cofactor biosynthesis; (R)-pantothenate biosynthesis; (R)-pantothenate from (R)-pantoate and beta-alanine: step 1/1. Its function is as follows. Catalyzes the condensation of pantoate with beta-alanine in an ATP-dependent reaction via a pantoyl-adenylate intermediate. The polypeptide is Pantothenate synthetase (Anaplasma marginale (strain St. Maries)).